The following is a 699-amino-acid chain: D-(-)-3-hydroxybutyrate oligomer hydrolase (699 aa).

The signal sequence occupies residues 1–33 (MTAIRGGSRRAPGLALALLGGVLLGACHGDENA). Ser311 serves as the catalytic Charge relay system.

Belongs to the D-(-)-3-hydroxybutyrate oligomer hydrolase family.

It is found in the secreted. The catalysed reaction is (3R)-hydroxybutanoate dimer + H2O = 2 (R)-3-hydroxybutanoate + H(+). Its pathway is lipid metabolism; butanoate metabolism. Participates in the degradation of poly-3-hydroxybutyrate (PHB). It works downstream of poly(3-hydroxybutyrate) depolymerase, hydrolyzing D(-)-3-hydroxybutyrate oligomers of various length (3HB-oligomers) into 3HB-monomers. This is D-(-)-3-hydroxybutyrate oligomer hydrolase from Burkholderia mallei (strain SAVP1).